Here is a 211-residue protein sequence, read N- to C-terminus: SOSS complex subunit B2 (211 aa).

The OB DNA-binding region spans 27–97 (IVLEIGRVTK…TLYTGRGGDL (71 aa)). The interval 125–211 (NQQNKTSKEQ…GRDPRRASKR (87 aa)) is disordered. Residues 136–157 (GNSPPNQNAGNGTVPVFSNNNA) are compositionally biased toward polar residues. Over residues 179-195 (NGPPPVTAGGTPAPPKP) the composition is skewed to pro residues.

This sequence belongs to the SOSS-B family. SOSS-B2 subfamily. Component of the SOSS complex, composed of soss-b (soss-b1/nabp2 or soss-b2/nabp1), soss-a/ints3 and soss-c/inip. SOSS complexes containing soss-b1/nabp2 are more abundant than complexes containing soss-b2/nabp1.

The protein resides in the nucleus. Functionally, component of the SOSS complex, a multiprotein complex that functions downstream of the MRN complex to promote DNA repair and G2/M checkpoint. In the SOSS complex, acts as a sensor of single-stranded DNA that binds to single-stranded DNA. The SOSS complex associates with DNA lesions and influences diverse endpoints in the cellular DNA damage response including cell-cycle checkpoint activation, recombinational repair and maintenance of genomic stability. Required for efficient homologous recombination-dependent repair of double-strand breaks (DSBs). This Danio rerio (Zebrafish) protein is SOSS complex subunit B2 (nabp1).